A 127-amino-acid polypeptide reads, in one-letter code: Fluoride-specific ion channel FluC 2 (127 aa).

Transmembrane regions (helical) follow at residues 4 to 24 (IIAI…LSLL), 31 to 51 (FWIT…ITNL), 62 to 82 (IVIG…TFTF), and 94 to 114 (VLAL…GLAG). 2 residues coordinate Na(+): G72 and T75.

The protein belongs to the fluoride channel Fluc/FEX (TC 1.A.43) family.

The protein localises to the cell membrane. It carries out the reaction fluoride(in) = fluoride(out). Its activity is regulated as follows. Na(+) is not transported, but it plays an essential structural role and its presence is essential for fluoride channel function. Its function is as follows. Fluoride-specific ion channel. Important for reducing fluoride concentration in the cell, thus reducing its toxicity. The polypeptide is Fluoride-specific ion channel FluC 2 (Lactiplantibacillus plantarum (strain ATCC BAA-793 / NCIMB 8826 / WCFS1) (Lactobacillus plantarum)).